The following is a 79-amino-acid chain: MENLSVDLLYMAAALMMGLAAIGAAIGIGILGGKFLEGAARQPDLIPLLRTQFFIVMGLVDAIPMIAVGLGLYVMFAVA.

2 helical membrane passes run 11–31 (MAAA…IGIL) and 53–73 (FFIV…LGLY).

The protein belongs to the ATPase C chain family. In terms of assembly, F-type ATPases have 2 components, F(1) - the catalytic core - and F(0) - the membrane proton channel. F(1) has five subunits: alpha(3), beta(3), gamma(1), delta(1), epsilon(1). F(0) has three main subunits: a(1), b(2) and c(10-14). The alpha and beta chains form an alternating ring which encloses part of the gamma chain. F(1) is attached to F(0) by a central stalk formed by the gamma and epsilon chains, while a peripheral stalk is formed by the delta and b chains.

The protein localises to the cell inner membrane. In terms of biological role, f(1)F(0) ATP synthase produces ATP from ADP in the presence of a proton or sodium gradient. F-type ATPases consist of two structural domains, F(1) containing the extramembraneous catalytic core and F(0) containing the membrane proton channel, linked together by a central stalk and a peripheral stalk. During catalysis, ATP synthesis in the catalytic domain of F(1) is coupled via a rotary mechanism of the central stalk subunits to proton translocation. Its function is as follows. Key component of the F(0) channel; it plays a direct role in translocation across the membrane. A homomeric c-ring of between 10-14 subunits forms the central stalk rotor element with the F(1) delta and epsilon subunits. In Pectobacterium atrosepticum (strain SCRI 1043 / ATCC BAA-672) (Erwinia carotovora subsp. atroseptica), this protein is ATP synthase subunit c.